The chain runs to 115 residues: Large ribosomal subunit protein bL19 (115 aa).

The protein belongs to the bacterial ribosomal protein bL19 family.

Functionally, this protein is located at the 30S-50S ribosomal subunit interface and may play a role in the structure and function of the aminoacyl-tRNA binding site. In Pectobacterium atrosepticum (strain SCRI 1043 / ATCC BAA-672) (Erwinia carotovora subsp. atroseptica), this protein is Large ribosomal subunit protein bL19.